We begin with the raw amino-acid sequence, 160 residues long: Eosinophil cationic protein (160 aa).

Positions 1 to 27 (MVPKLFTSQICLLLLLGLMGVEGSLHA) are cleaved as a signal peptide. The required for nearly all of the bactericidal activities; partially involved in LPS-binding stretch occupies residues 28 to 72 (RPPQFTRAQWFAIQHISLNPPRCTIAMRVINNYRWRCKNQNTFLR). The active-site Proton acceptor is histidine 42. 4 disulfides stabilise this stretch: cysteine 50–cysteine 110, cysteine 64–cysteine 123, cysteine 82–cysteine 138, and cysteine 89–cysteine 98. Tyrosine 60 carries the post-translational modification 3'-nitrotyrosine. Position 65–69 (65–69 (KNQNT)) interacts with substrate. Asparagine 84, asparagine 92, and asparagine 119 each carry an N-linked (GlcNAc...) asparagine glycan. Histidine 155 functions as the Proton donor in the catalytic mechanism.

This sequence belongs to the pancreatic ribonuclease family. As to quaternary structure, interacts with bacterial lipopolysaccharide (LPS) and lipoteichoic acid (LTA). In vitro interacts with phospholipid bilayers.

It is found in the secreted. Its function is as follows. Cytotoxin and helminthotoxin with low-efficiency ribonuclease activity. Possesses a wide variety of biological activities. Exhibits antibacterial activity. This Gorilla gorilla gorilla (Western lowland gorilla) protein is Eosinophil cationic protein (RNASE3).